Here is an 88-residue protein sequence, read N- to C-terminus: Small ribosomal subunit protein bS20 (88 aa).

It belongs to the bacterial ribosomal protein bS20 family.

Functionally, binds directly to 16S ribosomal RNA. The chain is Small ribosomal subunit protein bS20 from Bradyrhizobium diazoefficiens (strain JCM 10833 / BCRC 13528 / IAM 13628 / NBRC 14792 / USDA 110).